The following is a 196-amino-acid chain: 3-isopropylmalate dehydratase small subunit (196 aa).

This sequence belongs to the LeuD family. LeuD type 1 subfamily. In terms of assembly, heterodimer of LeuC and LeuD.

The catalysed reaction is (2R,3S)-3-isopropylmalate = (2S)-2-isopropylmalate. It participates in amino-acid biosynthesis; L-leucine biosynthesis; L-leucine from 3-methyl-2-oxobutanoate: step 2/4. Its function is as follows. Catalyzes the isomerization between 2-isopropylmalate and 3-isopropylmalate, via the formation of 2-isopropylmaleate. The chain is 3-isopropylmalate dehydratase small subunit from Corynebacterium diphtheriae (strain ATCC 700971 / NCTC 13129 / Biotype gravis).